A 227-amino-acid polypeptide reads, in one-letter code: Enolase-phosphatase E1 (227 aa).

The Mg(2+) site is built by D11 and E13. Substrate is bound by residues S118–S119 and K161. Position 186 (D186) interacts with Mg(2+).

It belongs to the HAD-like hydrolase superfamily. MasA/MtnC family. Monomer. Requires Mg(2+) as cofactor.

The protein localises to the cytoplasm. It is found in the nucleus. The enzyme catalyses 5-methylsulfanyl-2,3-dioxopentyl phosphate + H2O = 1,2-dihydroxy-5-(methylsulfanyl)pent-1-en-3-one + phosphate. It functions in the pathway amino-acid biosynthesis; L-methionine biosynthesis via salvage pathway; L-methionine from S-methyl-5-thio-alpha-D-ribose 1-phosphate: step 3/6. Its pathway is amino-acid biosynthesis; L-methionine biosynthesis via salvage pathway; L-methionine from S-methyl-5-thio-alpha-D-ribose 1-phosphate: step 4/6. Its function is as follows. Bifunctional enzyme that catalyzes the enolization of 2,3-diketo-5-methylthiopentyl-1-phosphate (DK-MTP-1-P) into the intermediate 2-hydroxy-3-keto-5-methylthiopentenyl-1-phosphate (HK-MTPenyl-1-P), which is then dephosphorylated to form the acireductone 1,2-dihydroxy-3-keto-5-methylthiopentene (DHK-MTPene). The polypeptide is Enolase-phosphatase E1 (Saccharomyces cerevisiae (strain YJM789) (Baker's yeast)).